Reading from the N-terminus, the 512-residue chain is NADH-quinone oxidoreductase subunit N 2 (512 aa).

Transmembrane regions (helical) follow at residues 23-43 (AFVP…IDLF), 50-70 (TIIP…VYLQ), 88-108 (FAIF…LISI), 120-140 (SLGE…LMAS), 144-164 (LLMM…LVGY), 179-199 (VIYG…IYGL), 220-240 (ITLM…AGVV), 254-274 (PTPI…AMLI), 295-315 (WVTL…VVAL), 323-343 (LLAY…IVAD), 351-371 (LFYL…IILI), 394-414 (AASL…VGFI), 429-449 (VFVW…YFYF), and 477-497 (LVAF…PLSV).

This sequence belongs to the complex I subunit 2 family. As to quaternary structure, NDH-1 is composed of 14 different subunits. Subunits NuoA, H, J, K, L, M, N constitute the membrane sector of the complex.

The protein resides in the cell inner membrane. It catalyses the reaction a quinone + NADH + 5 H(+)(in) = a quinol + NAD(+) + 4 H(+)(out). NDH-1 shuttles electrons from NADH, via FMN and iron-sulfur (Fe-S) centers, to quinones in the respiratory chain. The immediate electron acceptor for the enzyme in this species is believed to be a menaquinone. Couples the redox reaction to proton translocation (for every two electrons transferred, four hydrogen ions are translocated across the cytoplasmic membrane), and thus conserves the redox energy in a proton gradient. The chain is NADH-quinone oxidoreductase subunit N 2 from Chloroherpeton thalassium (strain ATCC 35110 / GB-78).